A 112-amino-acid chain; its full sequence is Putative pterin-4-alpha-carbinolamine dehydratase (112 aa).

The interval 1-30 is disordered; that stretch reads MSDELQSRTCTPCRGDVPPMTKAEAKRQLA.

It belongs to the pterin-4-alpha-carbinolamine dehydratase family.

It catalyses the reaction (4aS,6R)-4a-hydroxy-L-erythro-5,6,7,8-tetrahydrobiopterin = (6R)-L-erythro-6,7-dihydrobiopterin + H2O. The chain is Putative pterin-4-alpha-carbinolamine dehydratase from Aromatoleum aromaticum (strain DSM 19018 / LMG 30748 / EbN1) (Azoarcus sp. (strain EbN1)).